A 543-amino-acid polypeptide reads, in one-letter code: Carboxypeptidase Y homolog A (543 aa).

The signal sequence occupies residues methionine 1–valine 17. The propeptide occupies proline 18–lysine 124. Intrachain disulfides connect cysteine 179/cysteine 419, cysteine 313/cysteine 327, cysteine 337/cysteine 360, cysteine 344/cysteine 353, and cysteine 382/cysteine 389. Residue asparagine 210 is glycosylated (N-linked (GlcNAc...) asparagine). Serine 266 is an active-site residue. Aspartate 458 is a catalytic residue. Asparagine 509 is a glycosylation site (N-linked (GlcNAc...) asparagine). Histidine 520 is an active-site residue.

It belongs to the peptidase S10 family.

It is found in the vacuole. The catalysed reaction is Release of a C-terminal amino acid with broad specificity.. Functionally, vacuolar carboxypeptidase involved in degradation of small peptides. Digests preferentially peptides containing an aliphatic or hydrophobic residue in P1' position, as well as methionine, leucine or phenylalanine in P1 position of ester substrate. The polypeptide is Carboxypeptidase Y homolog A (cpyA) (Aspergillus clavatus (strain ATCC 1007 / CBS 513.65 / DSM 816 / NCTC 3887 / NRRL 1 / QM 1276 / 107)).